The following is a 1120-amino-acid chain: Isoleucine--tRNA ligase (1120 aa).

The 'HIGH' region motif lies at 64 to 74; the sequence is PFANGLPHYGH. The 'KMSKS' region signature appears at 647-651; the sequence is KLSKR. Lys-650 provides a ligand contact to ATP.

This sequence belongs to the class-I aminoacyl-tRNA synthetase family. IleS type 2 subfamily. As to quaternary structure, monomer. It depends on Zn(2+) as a cofactor.

It localises to the cytoplasm. It carries out the reaction tRNA(Ile) + L-isoleucine + ATP = L-isoleucyl-tRNA(Ile) + AMP + diphosphate. In terms of biological role, catalyzes the attachment of isoleucine to tRNA(Ile). As IleRS can inadvertently accommodate and process structurally similar amino acids such as valine, to avoid such errors it has two additional distinct tRNA(Ile)-dependent editing activities. One activity is designated as 'pretransfer' editing and involves the hydrolysis of activated Val-AMP. The other activity is designated 'posttransfer' editing and involves deacylation of mischarged Val-tRNA(Ile). The chain is Isoleucine--tRNA ligase from Ehrlichia canis (strain Jake).